A 300-amino-acid chain; its full sequence is Regulatory protein NocR (300 aa).

Residues 1 to 59 (MIQSRQLEAFRAVMLTGGMTSAANLVRITQPAISRLIRDLEEEIGISLFERTGNRLRPT) form the HTH lysR-type domain. A DNA-binding region (H-T-H motif) is located at residues 19-38 (MTSAANLVRITQPAISRLIR).

Belongs to the LysR transcriptional regulatory family.

Positive regulatory protein for the noc operon involved in nopaline catabolism and uptake. This Agrobacterium fabrum (strain C58 / ATCC 33970) (Agrobacterium tumefaciens (strain C58)) protein is Regulatory protein NocR (nocR).